The primary structure comprises 102 residues: Large ribosomal subunit protein bL21 (102 aa).

It belongs to the bacterial ribosomal protein bL21 family. Part of the 50S ribosomal subunit. Contacts protein L20.

In terms of biological role, this protein binds to 23S rRNA in the presence of protein L20. This chain is Large ribosomal subunit protein bL21, found in Citrifermentans bemidjiense (strain ATCC BAA-1014 / DSM 16622 / JCM 12645 / Bem) (Geobacter bemidjiensis).